The following is a 405-amino-acid chain: MENYNDILEKMLNGEIKPYQLDKMFGSKIATEIRRKFIEKKVGIEFKHICNYSIDEEMAMKKNIENMIGAIQIPLGFAGPLKINGEYAKGEFYIPLATTEGALVASVNRGCSIITKCGGATVRVIDDKMTRAPCLKTKSVVDAIKVRDWIRENFERIKEVAESTTRHGKLIKIEPILIVGRNLYPRFVFKTGDAMGMNMVTIATEKACNFIEGELKKEGIFVKTVAVSGNACVDKKPSGMNLINGRGKSIVAEVFLTEKEVNKYLKTTSQAIAEVNRLKNYIGSAISNSMGFNAHYANIIGAIFLATGQDEAHIVEGSLGITMAEVEDDGLYFSVTLPDVPIGTVGGGTRVETQKECLEMLGCYGDNKALKFAEIVGAAVLAGELSLLGALAAGHLGKAHQELGR.

Residues Glu-100 and Asp-310 each act as charge relay system in the active site. His-400 serves as the catalytic Proton donor.

The protein belongs to the HMG-CoA reductase family.

The catalysed reaction is (R)-mevalonate + 2 NADP(+) + CoA = (3S)-3-hydroxy-3-methylglutaryl-CoA + 2 NADPH + 2 H(+). The protein operates within metabolic intermediate biosynthesis; (R)-mevalonate biosynthesis; (R)-mevalonate from acetyl-CoA: step 3/3. In terms of biological role, converts HMG-CoA to mevalonate. In Methanocaldococcus jannaschii (strain ATCC 43067 / DSM 2661 / JAL-1 / JCM 10045 / NBRC 100440) (Methanococcus jannaschii), this protein is 3-hydroxy-3-methylglutaryl-coenzyme A reductase (hmgA).